The chain runs to 115 residues: Large ribosomal subunit protein bL19 (115 aa).

This sequence belongs to the bacterial ribosomal protein bL19 family.

This protein is located at the 30S-50S ribosomal subunit interface and may play a role in the structure and function of the aminoacyl-tRNA binding site. In Streptococcus mutans serotype c (strain ATCC 700610 / UA159), this protein is Large ribosomal subunit protein bL19.